The chain runs to 518 residues: Probable bifunctional methylthioribulose-1-phosphate dehydratase/enolase-phosphatase E1 (518 aa).

The segment at methionine 1 to aspartate 247 is methylthioribulose-1-phosphate dehydratase. Cysteine 119 contributes to the substrate binding site. 2 residues coordinate Zn(2+): histidine 137 and histidine 139. The Proton donor/acceptor; for methylthioribulose-1-phosphate dehydratase activity role is filled by glutamate 162. Histidine 212 is a Zn(2+) binding site. Residues isoleucine 279–isoleucine 518 are enolase-phosphatase E1. Residues aspartate 282 and glutamate 284 each contribute to the Mg(2+) site. Residues serine 417–serine 418 and lysine 451 contribute to the substrate site. Aspartate 477 lines the Mg(2+) pocket.

It in the N-terminal section; belongs to the aldolase class II family. MtnB subfamily. The protein in the C-terminal section; belongs to the HAD-like hydrolase superfamily. MasA/MtnC family. Zn(2+) serves as cofactor. Requires Mg(2+) as cofactor.

It carries out the reaction 5-(methylsulfanyl)-D-ribulose 1-phosphate = 5-methylsulfanyl-2,3-dioxopentyl phosphate + H2O. The catalysed reaction is 5-methylsulfanyl-2,3-dioxopentyl phosphate + H2O = 1,2-dihydroxy-5-(methylsulfanyl)pent-1-en-3-one + phosphate. The protein operates within amino-acid biosynthesis; L-methionine biosynthesis via salvage pathway; L-methionine from S-methyl-5-thio-alpha-D-ribose 1-phosphate: step 2/6. It participates in amino-acid biosynthesis; L-methionine biosynthesis via salvage pathway; L-methionine from S-methyl-5-thio-alpha-D-ribose 1-phosphate: step 3/6. It functions in the pathway amino-acid biosynthesis; L-methionine biosynthesis via salvage pathway; L-methionine from S-methyl-5-thio-alpha-D-ribose 1-phosphate: step 4/6. The sequence is that of Probable bifunctional methylthioribulose-1-phosphate dehydratase/enolase-phosphatase E1 from Populus trichocarpa (Western balsam poplar).